A 460-amino-acid polypeptide reads, in one-letter code: tRNA modification GTPase MnmE (460 aa).

Arg-29, Glu-91, and Lys-132 together coordinate (6S)-5-formyl-5,6,7,8-tetrahydrofolate. Positions 227-383 constitute a TrmE-type G domain; sequence GISIALIGKT…LIDTIIKKCG (157 aa). K(+) is bound at residue Asn-237. GTP-binding positions include 237 to 242, 256 to 262, and 281 to 284; these read NVGKSS, TNIPGTT, and DTAG. Residue Ser-241 coordinates Mg(2+). The K(+) site is built by Thr-256, Ile-258, and Thr-261. Residue Thr-262 participates in Mg(2+) binding. Position 460 (Lys-460) interacts with (6S)-5-formyl-5,6,7,8-tetrahydrofolate.

The protein belongs to the TRAFAC class TrmE-Era-EngA-EngB-Septin-like GTPase superfamily. TrmE GTPase family. Homodimer. Heterotetramer of two MnmE and two MnmG subunits. Requires K(+) as cofactor.

The protein resides in the cytoplasm. Its function is as follows. Exhibits a very high intrinsic GTPase hydrolysis rate. Involved in the addition of a carboxymethylaminomethyl (cmnm) group at the wobble position (U34) of certain tRNAs, forming tRNA-cmnm(5)s(2)U34. The chain is tRNA modification GTPase MnmE from Prochlorococcus marinus (strain MIT 9312).